A 214-amino-acid chain; its full sequence is Outer-membrane lipoprotein LolB (214 aa).

The signal sequence occupies residues 1-25 (MNNLKRFTKSIFSCIALSGLLFLGG). A lipid anchor (N-palmitoyl cysteine) is attached at C26. Residue C26 is the site of S-diacylglycerol cysteine attachment.

Belongs to the LolB family. Monomer.

Its subcellular location is the cell outer membrane. Functionally, plays a critical role in the incorporation of lipoproteins in the outer membrane after they are released by the LolA protein. The protein is Outer-membrane lipoprotein LolB of Shewanella sp. (strain MR-4).